The primary structure comprises 1097 residues: Translation initiation factor IF-2 (1097 aa).

Residues 79–458 (LEKRVSPQAD…RVIKKKPKKA (380 aa)) are disordered. The span at 97 to 112 (AKKEASQEKADAHAKL) shows a compositional bias: basic and acidic residues. Over residues 157 to 173 (AATLAVEEAPIAAAPTE) the composition is skewed to low complexity. Composition is skewed to basic and acidic residues over residues 174–190 (EPMH…KIDS) and 202–221 (VEVH…HAEE). Over residues 224–236 (TPTTEASSEETSA) the composition is skewed to low complexity. Over residues 258–267 (RKTQNTTNVS) the composition is skewed to polar residues. Residues 268–286 (EENKQHEKQPETLKSDKAM) show a composition bias toward basic and acidic residues. Over residues 340–363 (SDSLQAEISRQQNEISNRFSQSEN) the composition is skewed to polar residues. A compositionally biased stretch (basic residues) spans 376-385 (HKKKRKRKKN). Residues 402–443 (PKQEEKPVKKEKPKEREKPAAGKKEQTPGKKPVREDQKERVL) show a composition bias toward basic and acidic residues. The 171-residue stretch at 591–761 (TRPPVVTIMG…LVEAELLELK (171 aa)) folds into the tr-type G domain. The segment at 600–607 (GHVDHGKT) is G1. 600 to 607 (GHVDHGKT) provides a ligand contact to GTP. The segment at 625–629 (GITQH) is G2. Positions 647–650 (DTPG) are G3. GTP is bound by residues 647–651 (DTPGH) and 701–704 (NKID). Residues 701-704 (NKID) form a G4 region. The G5 stretch occupies residues 737–739 (SAK).

Belongs to the TRAFAC class translation factor GTPase superfamily. Classic translation factor GTPase family. IF-2 subfamily.

The protein resides in the cytoplasm. Its function is as follows. One of the essential components for the initiation of protein synthesis. Protects formylmethionyl-tRNA from spontaneous hydrolysis and promotes its binding to the 30S ribosomal subunits. Also involved in the hydrolysis of GTP during the formation of the 70S ribosomal complex. In Chloroherpeton thalassium (strain ATCC 35110 / GB-78), this protein is Translation initiation factor IF-2.